Here is a 757-residue protein sequence, read N- to C-terminus: Polyribonucleotide nucleotidyltransferase (757 aa).

Residues D482 and D488 each contribute to the Mg(2+) site. One can recognise a KH domain in the interval 549–608 (PRMLSFYIDKDKISAAIGSKGKNIRSVCERSNAKIEIGDDGKVSVFATSGTEAEIAKSMM). One can recognise an S1 motif domain in the interval 618-686 (GSIVDVKVVR…KGGCPKLSRR (69 aa)). The disordered stretch occupies residues 698 to 757 (GELYNEERKDGPNDRDNYYNNSFSRKPGGSHHKRPPRPHSGFSNRNRPKFGNNDSSSGFY). Positions 702-714 (NEERKDGPNDRDN) are enriched in basic and acidic residues. Residues 725–734 (GGSHHKRPPR) show a composition bias toward basic residues.

This sequence belongs to the polyribonucleotide nucleotidyltransferase family. Mg(2+) serves as cofactor.

It localises to the cytoplasm. It catalyses the reaction RNA(n+1) + phosphate = RNA(n) + a ribonucleoside 5'-diphosphate. Functionally, involved in mRNA degradation. Catalyzes the phosphorolysis of single-stranded polyribonucleotides processively in the 3'- to 5'-direction. This chain is Polyribonucleotide nucleotidyltransferase, found in Wolbachia pipientis wMel.